Reading from the N-terminus, the 539-residue chain is O-phosphoserine--tRNA(Cys) ligase (539 aa).

Substrate contacts are provided by residues 188–190, 233–235, 275–276, and asparagine 327; these read HMT, SAS, and YY.

The protein belongs to the class-II aminoacyl-tRNA synthetase family. O-phosphoseryl-tRNA(Cys) synthetase subfamily. In terms of assembly, homotetramer. Interacts with SepCysS.

The enzyme catalyses tRNA(Cys) + O-phospho-L-serine + ATP = O-phospho-L-seryl-tRNA(Cys) + AMP + diphosphate. Catalyzes the attachment of O-phosphoserine (Sep) to tRNA(Cys). The sequence is that of O-phosphoserine--tRNA(Cys) ligase from Methanosarcina mazei (strain ATCC BAA-159 / DSM 3647 / Goe1 / Go1 / JCM 11833 / OCM 88) (Methanosarcina frisia).